A 446-amino-acid chain; its full sequence is Trigger factor (446 aa).

A PPIase FKBP-type domain is found at 163-248; that stretch reads GDRLVIDFEG…VKEIKKKNLL (86 aa).

The protein belongs to the FKBP-type PPIase family. Tig subfamily.

It localises to the cytoplasm. It carries out the reaction [protein]-peptidylproline (omega=180) = [protein]-peptidylproline (omega=0). Functionally, involved in protein export. Acts as a chaperone by maintaining the newly synthesized protein in an open conformation. Functions as a peptidyl-prolyl cis-trans isomerase. The sequence is that of Trigger factor from Natranaerobius thermophilus (strain ATCC BAA-1301 / DSM 18059 / JW/NM-WN-LF).